Reading from the N-terminus, the 976-residue chain is Synaptonemal complex protein 1 (976 aa).

A Mediates head to head self-assembly of N-terminal ends motif is present at residues 101–111 (GLSRVYSKLYK). Positions 117-120 (KKWK) match the Nuclear localization signal motif. The tract at residues 206–362 (ETRQVYMDLN…CQLTEEKETQ (157 aa)) is interaction with SYCE3. Coiled-coil stretches lie at residues 211–316 (YMDL…SIEK), 391–439 (LRTE…LKKV), 499–685 (VKDL…VEKA), and 739–798 (EQEQ…KTQT). Positions 676–770 (ENLLEEVEKA…LSVKKQLEIE (95 aa)) are required for pH-induced assembly of C-terminal ends into antiparallel tetramers. The short motif at 679 to 682 (LEEV) is the Nuclear localization signal element. The tract at residues 784–976 (NTATLKEKKD…KLKEAEKLFV (193 aa)) is DNA-binding. A Nuclear localization signal motif is present at residues 880–883 (KKRK).

As to quaternary structure, structural component of synaptonemal complexes. Homotetramer that consists of an N-terminal four-helical bundle that bifurcates into two elongated C-terminal dimeric coiled coils. This tetrameric building block potentially self-assembles into a supramolecular zipper-like lattice to mediate meiotic chromosome synapsis. Self-assembly is likely initiated by local proton density at chromosome axis, which is predicted to trigger antiparallel back to back assembly of adjacent C-terminal ends into tetrameric structures that anchor to chromosomal DNA. Then the N-terminal ends are predicted to undergo cooperative antiparallel head to head assembly at the midline of synaptonemal complexes central element to form a zipper-like lattice between properly aligned homologous chromosomes. The nascent synapsis generated by SYCP1 is stabilized through interaction with central element proteins SYCE1 and SYCE2. Interacts (via tetrameric core) with SYCE3; the interaction remodels SYCP1 homotetramers to 2:1 heterotrimers with SYCE3. SYCP1/SYCE3 heterotrimers form lattice assemblies as part of the mature synaptonemal complex via both lateral and head-to-head interactions. Forms a complex with EWSR1, PRDM9, SYCP3 and REC8; complex formation is dependent of phosphorylated form of REC8 and requires PRDM9 bound to hotspot DNA; EWSR1 joins PRDM9 with the chromosomal axis through REC8. Interacts with SPO16. Testis.

The protein localises to the nucleus. Its subcellular location is the chromosome. It is found in the centromere. Functionally, major component of the transverse filaments of synaptonemal complexes, formed between homologous chromosomes during meiotic prophase. Required for normal assembly of the central element of the synaptonemal complexes. Required for normal centromere pairing during meiosis. Required for normal meiotic chromosome synapsis during oocyte and spermatocyte development and for normal male and female fertility. This chain is Synaptonemal complex protein 1, found in Homo sapiens (Human).